Reading from the N-terminus, the 66-residue chain is Alpha-actitoxin-Ms11a-2 (66 aa).

The N-terminal stretch at 1-24 (MASKIFFVLAVFLVMSAVLPESFA) is a signal peptide. Intrachain disulfides connect Cys26–Cys41, Cys33–Cys46, and Cys40–Cys61.

It is found in the secreted. The protein localises to the nematocyst. Functionally, alpha-toxins act on postsynaptic membranes, they bind to the nicotinic acetylcholine receptors (nAChR) and thus inhibit them. This toxin competes with alpha-bungarotoxin for binding to orthosteric sites on muscle-type T.carlifornicus (IC(50)=1080 nM) and human alpha-7/CHRNA7 nAChRs (IC(50)=14.13 uM). In Metridium senile (Brown sea anemone), this protein is Alpha-actitoxin-Ms11a-2.